Reading from the N-terminus, the 274-residue chain is Penicillin-insensitive murein endopeptidase (274 aa).

Residues Met1–Ala19 form the signal peptide. Disulfide bonds link Cys44–Cys265, Cys187–Cys235, and Cys216–Cys223. Positions 110, 113, 120, 147, and 150 each coordinate Zn(2+). A disordered region spans residues Asp225–Leu274.

It belongs to the peptidase M74 family. As to quaternary structure, dimer. Requires Zn(2+) as cofactor.

The protein localises to the periplasm. Its function is as follows. Murein endopeptidase that cleaves the D-alanyl-meso-2,6-diamino-pimelyl amide bond that connects peptidoglycan strands. Likely plays a role in the removal of murein from the sacculus. This chain is Penicillin-insensitive murein endopeptidase, found in Salmonella paratyphi A (strain ATCC 9150 / SARB42).